Reading from the N-terminus, the 414-residue chain is Ciliary microtubule-associated protein 2 (414 aa).

The protein is Ciliary microtubule-associated protein 2 (Cimap2) of Mus musculus (Mouse).